The chain runs to 199 residues: Probable GTP-binding protein EngB (199 aa).

Residues 28–199 (DLPEIALAGR…ESWDTILEYL (172 aa)) form the EngB-type G domain. GTP contacts are provided by residues 36-43 (GRSNVGKS), 63-67 (GKTQL), 81-84 (DVPG), 148-151 (TKAD), and 180-182 (FSS). The Mg(2+) site is built by serine 43 and threonine 65.

It belongs to the TRAFAC class TrmE-Era-EngA-EngB-Septin-like GTPase superfamily. EngB GTPase family. Mg(2+) is required as a cofactor.

Functionally, necessary for normal cell division and for the maintenance of normal septation. This chain is Probable GTP-binding protein EngB, found in Streptococcus equi subsp. zooepidemicus (strain H70).